The chain runs to 504 residues: Anaerobic nitric oxide reductase transcription regulator NorR (504 aa).

D57 is subject to 4-aspartylphosphate. One can recognise a Sigma-54 factor interaction domain in the interval 187 to 416 (MIGLSPGMTQ…LEHAIHRAVV (230 aa)). ATP contacts are provided by residues 215 to 222 (GETGTGKE) and 278 to 287 (ADNGTLFLDE). A DNA-binding region (H-T-H motif) is located at residues 479-498 (WAACARMLETDVANLHRLAK).

It participates in nitrogen metabolism; nitric oxide reduction. Its function is as follows. Required for the expression of anaerobic nitric oxide (NO) reductase, acts as a transcriptional activator for at least the norVW operon. Activation also requires sigma-54. The sequence is that of Anaerobic nitric oxide reductase transcription regulator NorR from Shigella dysenteriae serotype 1 (strain Sd197).